Consider the following 283-residue polypeptide: MELWYTEEHTDKVRFSIKVDEQLYSGKSDFQRIDVFKSQEFGTFFTLDGLMMVTEKDEFIYHDMIVHVPMATNPNIKNVLVIGAGDGGTVRELTRYETIEKIDMVEIDKLVVDVCREYLPQTANKLDDPRVSLFFEDGLKFVRSVENKYDLIIVDSTDPFGPGEGLFTREFYGNCFKALKEDGILVNQHESPYYEEYARGMKRAHKRIKECFPVCRVYQAHIPTYPSGHWLFGFASKKYDPLNADIEKWNDLGLKTKYYNTELHKGCFALPNYVKEMLENVDE.

Positions 2–237 constitute a PABS domain; sequence ELWYTEEHTD…GHWLFGFASK (236 aa). Residue Gln-31 coordinates S-methyl-5'-thioadenosine. 2 residues coordinate spermidine: His-62 and Asp-86. Residues Glu-106 and 137–138 each bind S-methyl-5'-thioadenosine; that span reads DG. Asp-155 acts as the Proton acceptor in catalysis. 155–158 is a binding site for spermidine; that stretch reads DSTD. Pro-162 provides a ligand contact to S-methyl-5'-thioadenosine.

Belongs to the spermidine/spermine synthase family. In terms of assembly, homodimer or homotetramer.

It is found in the cytoplasm. The enzyme catalyses S-adenosyl 3-(methylsulfanyl)propylamine + putrescine = S-methyl-5'-thioadenosine + spermidine + H(+). The protein operates within amine and polyamine biosynthesis; spermidine biosynthesis; spermidine from putrescine: step 1/1. Functionally, catalyzes the irreversible transfer of a propylamine group from the amino donor S-adenosylmethioninamine (decarboxy-AdoMet) to putrescine (1,4-diaminobutane) to yield spermidine. This chain is Polyamine aminopropyltransferase, found in Clostridium perfringens (strain ATCC 13124 / DSM 756 / JCM 1290 / NCIMB 6125 / NCTC 8237 / Type A).